A 195-amino-acid polypeptide reads, in one-letter code: Probable GTP-binding protein EngB (195 aa).

The EngB-type G domain maps to 24–195 (DWPEIALAGR…EAWTAILKYL (172 aa)). GTP-binding positions include 32–39 (GRSNVGKS), 59–63 (GKTQL), 77–80 (DVPG), 144–147 (TKAD), and 176–178 (FSS). Mg(2+)-binding residues include Ser39 and Thr61.

The protein belongs to the TRAFAC class TrmE-Era-EngA-EngB-Septin-like GTPase superfamily. EngB GTPase family. The cofactor is Mg(2+).

Its function is as follows. Necessary for normal cell division and for the maintenance of normal septation. This Lactococcus lactis subsp. cremoris (strain MG1363) protein is Probable GTP-binding protein EngB.